Here is a 461-residue protein sequence, read N- to C-terminus: pre-mRNA splicing regulator USH1G (461 aa).

ANK repeat units follow at residues 31 to 60 (DGMTPTLWAAYHGNLESLRLIVSRGGDPDK), 64 to 93 (WGNTPLHLAASNGHLHCLSFLVSFGANIWC), and 97 to 126 (DYHTPLDMAAMKGHMECVRYLDSIAAKQSS). Disordered stretches follow at residues 208–243 (GTARGKTKMQKKLERRKQGGEGTFKVSEDGRKSARS) and 332–368 (EDGGLDGVGAPRGRLQSSPSLDDDSLGSANSLQDRSC). The segment covering 210–222 (ARGKTKMQKKLER) has biased composition (basic residues). In terms of domain architecture, SAM spans 385–447 (LEPETSPLET…KILGAVRRRR (63 aa)). Ser-422 is subject to Phosphoserine; by CK2.

Part of a complex composed of USH1C, USH1G and MYO7A. Interacts with USH1C (via the first PDZ domain). Interacts with PDZD7. Interacts with CDH23 and PCDH15; these interactions may recruit USH1G to the plasma membrane. Interacts with intraflagellar transport proteins IFT20, IFT52 and IFT57. Interacts with splicing factors SF3B1, PRPF6, PRPF31 and SON. Interacts with the U4/U6.U5 tri-small nuclear ribonucleoprotein (tri-snRNP) complex in the presence of pre-mRNAs. Interacts (via SAM domain) with MAGI2 (via PDZ 6 domain); the interaction is triggered by phosphorylation of USH1G by CK2 and negatively regulates MAGI2-mediated endocytosis. As to expression, expressed in vestibule of the inner ear, eye and small intestine.

It localises to the cytoplasm. The protein localises to the cytosol. Its subcellular location is the cytoskeleton. The protein resides in the cell membrane. It is found in the cell projection. It localises to the cilium. The protein localises to the nucleus speckle. Its subcellular location is the nucleus. The protein resides in the cajal body. It is found in the microtubule organizing center. It localises to the centrosome. The protein localises to the photoreceptor inner segment. Functionally, plays a role in pre-mRNA splicing by regulating the release and transfer of U4/U6.U5 tri-small nuclear ribonucleoprotein (tri-snRNP) complexes from their assembly site in Cajal bodies to nuclear speckles, thereby contributing to the assembly of the pre-catalytic spliceosome on target pre-mRNAs. May also participate in recycling of snRNPs back to Cajal bodies during splicing. Plays a role in regulating MAGI2-mediated endocytosis. Anchoring/scaffolding protein that is a part of the functional network formed by USH1C, USH1G, CDH23 and MYO7A that mediates mechanotransduction in cochlear hair cells. Required for normal development and maintenance of cochlear hair cell bundles. Required for normal hearing. This is pre-mRNA splicing regulator USH1G (USH1G) from Homo sapiens (Human).